The following is a 191-amino-acid chain: Thymidylate kinase (191 aa).

7–14 contributes to the ATP binding site; sequence GVDGAGKS.

This sequence belongs to the thymidylate kinase family.

The enzyme catalyses dTMP + ATP = dTDP + ADP. In terms of biological role, phosphorylation of dTMP to form dTDP in both de novo and salvage pathways of dTTP synthesis. The polypeptide is Thymidylate kinase (Helicobacter pylori (strain P12)).